An 894-amino-acid chain; its full sequence is Probable ion channel SYM8 (894 aa).

A disordered region spans residues 1 to 124 (MAKSNEEPNS…PPSLPIAITK (124 aa)). Composition is skewed to polar residues over residues 7–16 (EPNSNLNTNK), 24–33 (TLAQQPSLNL), and 44–63 (IGNS…QRNY). A run of 4 helical transmembrane segments spans residues 134 to 154 (SPIF…SAFL), 204 to 224 (TISL…YKYI), 267 to 287 (LALL…LYAV), and 319 to 339 (IVSV…LGLV). RCK N-terminal domains are found at residues 360–501 (RNHV…ETVV) and 620–769 (PEKI…DKSI). A coiled-coil region spans residues 390–415 (VIVVLAEKEKEEMEMDIAKLEFDFMG).

The protein belongs to the castor/pollux (TC 1.A.1.23) family. Homotetramer.

The protein resides in the nucleus membrane. In terms of biological role, required for both rhizobial and mycorrhizal symbiosis. Involved in Nod-factor-induced calcium spiking. May induce a change in membrane polarization that activates the opening of a calcium channel required for calcium spiking. Might be calcium gated. In Pisum sativum (Garden pea), this protein is Probable ion channel SYM8 (SYM8).